Consider the following 147-residue polypeptide: Hemoglobin subunit deltaH (147 aa).

The Globin domain occupies 3 to 147 (RLTDSEKAEV…MANALAHKYH (145 aa)). Residues H64 and H93 each contribute to the heme b site.

It belongs to the globin family. Heterotetramer of two delta chains and two alpha chains. As to expression, red blood cells.

The chain is Hemoglobin subunit deltaH (HBD) from Dendrohyrax dorsalis (Beecroft's tree hyrax).